A 384-amino-acid chain; its full sequence is Bacterial ceramide synthase (384 aa).

It localises to the cytoplasm. It catalyses the reaction 3-oxosphinganine + a fatty acyl-CoA = N-acyl-3-oxosphinganine + CoA + H(+). The enzyme catalyses 3-oxosphinganine + tetradecanoyl-CoA = N-tetradecanoyl-3-oxosphinganine + CoA + H(+). The catalysed reaction is 3-oxosphinganine + hexadecanoyl-CoA = N-hexadecanoyl-3-oxosphinganine + CoA + H(+). It carries out the reaction 3-oxosphinganine + (9Z)-hexadecenoyl-CoA = N-(9Z-hexadecenoyl)-3-oxosphinganine + CoA + H(+). It catalyses the reaction 3-oxosphinganine + octanoyl-CoA = N-octanoyl-3-oxosphinganine + CoA + H(+). The enzyme catalyses 3-oxosphinganine + decanoyl-CoA = N-decanoyl-3-oxosphinganine + CoA + H(+). The catalysed reaction is 3-oxosphinganine + dodecanoyl-CoA = N-dodecanoyl-3-oxosphinganine + CoA + H(+). It carries out the reaction 3-oxosphinganine + octadecanoyl-CoA = N-octadecanoyl-3-oxosphinganine + CoA + H(+). It catalyses the reaction 3-oxosphinganine + eicosanoyl-CoA = N-eicosanoyl-3-oxosphinganine + CoA + H(+). The enzyme catalyses 3-oxosphinganine + docosanoyl-CoA = N-docosanoyl-3-ketodihydrosphingosine + CoA + H(+). The catalysed reaction is 3-oxosphinganine + tetracosanoyl-CoA = N-tetracosanoyl-3-oxosphinganine + CoA + H(+). Its pathway is lipid metabolism; sphingolipid metabolism. Functionally, involved in de novo bacterial ceramide synthesis. Catalyzes the condensation of 3-oxosphinganine with an acyl-CoA to generate oxidized ceramides. Can use acyl-CoA substrates ranging from C8 to C24, with highest in vitro activity with C14 and very little activity with acyl-CoA thioesters of 18 carbons or longer. May have a preference for monounsaturated acyl-CoA substrates, as it has a threefold greater preference for C16:1-CoA over C16:0-CoA as a substrate in vitro. The chain is Bacterial ceramide synthase from Caulobacter vibrioides (strain NA1000 / CB15N) (Caulobacter crescentus).